The primary structure comprises 275 residues: Ribosomal RNA small subunit methyltransferase A (275 aa).

S-adenosyl-L-methionine contacts are provided by Asn-19, Leu-21, Gly-46, Glu-71, Asp-94, and Asn-117.

This sequence belongs to the class I-like SAM-binding methyltransferase superfamily. rRNA adenine N(6)-methyltransferase family. RsmA subfamily.

The protein localises to the cytoplasm. It catalyses the reaction adenosine(1518)/adenosine(1519) in 16S rRNA + 4 S-adenosyl-L-methionine = N(6)-dimethyladenosine(1518)/N(6)-dimethyladenosine(1519) in 16S rRNA + 4 S-adenosyl-L-homocysteine + 4 H(+). Functionally, specifically dimethylates two adjacent adenosines (A1518 and A1519) in the loop of a conserved hairpin near the 3'-end of 16S rRNA in the 30S particle. May play a critical role in biogenesis of 30S subunits. The protein is Ribosomal RNA small subunit methyltransferase A of Burkholderia pseudomallei (strain 668).